The chain runs to 162 residues: Caveolin-2 (162 aa).

At 1-86 the chain is on the cytoplasmic side; it reads MGLETEKADV…FEISKYVMYK (86 aa). Tyrosine 19 is subject to Phosphotyrosine; by SRC. Serine 20 carries the post-translational modification Phosphoserine. Phosphotyrosine; by SRC is present on tyrosine 27. Residue serine 36 is modified to Phosphoserine. The helical intramembrane region spans 87-107; that stretch reads FLTVFLAIPLAFAAGILFATL. The Cytoplasmic portion of the chain corresponds to 108-162; that stretch reads SCLHIWIIMPFVKTCLMVLPSVQTIWKSVTDVIIAPLCTSVGRSLSSISLQLSHD.

Belongs to the caveolin family. Monomer or homodimer. Interacts with CAV1; the interaction forms a stable heterooligomeric complex that is required for targeting to lipid rafts and for caveolae formation. Tyrosine phosphorylated forms do not form heterooligomers with the Tyr-19-phosphorylated form existing as a monomer or dimer, and the Tyr-27-form as a monomer only. Interacts (tyrosine phosphorylated form) with the SH2 domain-containing proteins, RASA1, NCK1 and SRC. Interacts (tyrosine phosphorylated form) with INSR, the interaction (Tyr-27-phosphorylated form) is increased on insulin stimulation. Interacts (Tyr-19 phosphorylated form) with MAPK1 (phosphorylated form); the interaction, promoted by insulin, leads to nuclear location and MAPK1 activation. Interacts with STAT3; the interaction is increased on insulin-induced tyrosine phosphorylation leading to STAT activation. Post-translationally, phosphorylated on serine and tyrosine residues. Phosphorylation on Ser-36 appears to modulate mitosis in endothelial cells. Phosphorylation on both Tyr-19 and Tyr-27 is required for insulin-induced 'Ser-727' phosphorylation of STAT3 and its activation. Phosphorylation on Tyr-19 is required for insulin-induced phosphorylation of MAPK1 and DNA binding of STAT3. Tyrosine phosphorylation is induced by both EGF and insulin.

Its subcellular location is the nucleus. The protein resides in the cytoplasm. It localises to the golgi apparatus membrane. It is found in the cell membrane. The protein localises to the membrane. Its subcellular location is the caveola. Its function is as follows. May act as a scaffolding protein within caveolar membranes. Interacts directly with G-protein alpha subunits and can functionally regulate their activity. Acts as an accessory protein in conjunction with CAV1 in targeting to lipid rafts and driving caveolae formation. The Ser-36 phosphorylated form has a role in modulating mitosis in endothelial cells. Positive regulator of cellular mitogenesis of the MAPK signaling pathway. Required for the insulin-stimulated nuclear translocation and activation of MAPK1 and STAT3, and the subsequent regulation of cell cycle progression. In Eulemur macaco macaco (Black lemur), this protein is Caveolin-2 (CAV2).